A 203-amino-acid chain; its full sequence is Glycerol-3-phosphate acyltransferase (203 aa).

5 helical membrane-spanning segments follow: residues 10 to 30, 59 to 79, 87 to 107, 116 to 136, and 168 to 188; these read LLAL…GLLI, PAAA…VILA, AAQI…YLKF, FFGT…AIWL, and LVVL…ENII.

It belongs to the PlsY family. Probably interacts with PlsX.

The protein resides in the cell inner membrane. The enzyme catalyses an acyl phosphate + sn-glycerol 3-phosphate = a 1-acyl-sn-glycero-3-phosphate + phosphate. It participates in lipid metabolism; phospholipid metabolism. Catalyzes the transfer of an acyl group from acyl-phosphate (acyl-PO(4)) to glycerol-3-phosphate (G3P) to form lysophosphatidic acid (LPA). This enzyme utilizes acyl-phosphate as fatty acyl donor, but not acyl-CoA or acyl-ACP. The protein is Glycerol-3-phosphate acyltransferase of Dinoroseobacter shibae (strain DSM 16493 / NCIMB 14021 / DFL 12).